Reading from the N-terminus, the 406-residue chain is CinA-like protein (406 aa).

This sequence belongs to the CinA family.

The protein is CinA-like protein of Thermomicrobium roseum (strain ATCC 27502 / DSM 5159 / P-2).